Consider the following 142-residue polypeptide: Large ribosomal subunit protein uL11 (142 aa).

Belongs to the universal ribosomal protein uL11 family. Part of the ribosomal stalk of the 50S ribosomal subunit. Interacts with L10 and the large rRNA to form the base of the stalk. L10 forms an elongated spine to which L12 dimers bind in a sequential fashion forming a multimeric L10(L12)X complex. In terms of processing, one or more lysine residues are methylated.

In terms of biological role, forms part of the ribosomal stalk which helps the ribosome interact with GTP-bound translation factors. The chain is Large ribosomal subunit protein uL11 from Mycobacterium sp. (strain JLS).